A 357-amino-acid chain; its full sequence is Selenide, water dikinase (357 aa).

Cysteine 25 is a catalytic residue. Residues lysine 28 and 57-59 (TAD) contribute to the ATP site. Aspartate 60 contributes to the Mg(2+) binding site. ATP-binding positions include aspartate 77, aspartate 100, and 148-150 (GHS). Aspartate 100 is a binding site for Mg(2+). Aspartate 236 lines the Mg(2+) pocket.

It belongs to the selenophosphate synthase 1 family. Class I subfamily. As to quaternary structure, homodimer. The cofactor is Mg(2+).

It catalyses the reaction hydrogenselenide + ATP + H2O = selenophosphate + AMP + phosphate + 2 H(+). Its function is as follows. Synthesizes selenophosphate from selenide and ATP. In Pseudomonas straminea, this protein is Selenide, water dikinase.